We begin with the raw amino-acid sequence, 105 residues long: Large ribosomal subunit protein bL21c (105 aa).

The protein belongs to the bacterial ribosomal protein bL21 family. As to quaternary structure, part of the 50S ribosomal subunit.

The protein localises to the plastid. It is found in the chloroplast. This protein binds to 23S rRNA. This is Large ribosomal subunit protein bL21c from Thalassiosira pseudonana (Marine diatom).